The following is an 89-amino-acid chain: Small ribosomal subunit protein uS15 (89 aa).

It belongs to the universal ribosomal protein uS15 family. In terms of assembly, part of the 30S ribosomal subunit. Forms a bridge to the 50S subunit in the 70S ribosome, contacting the 23S rRNA.

Functionally, one of the primary rRNA binding proteins, it binds directly to 16S rRNA where it helps nucleate assembly of the platform of the 30S subunit by binding and bridging several RNA helices of the 16S rRNA. Its function is as follows. Forms an intersubunit bridge (bridge B4) with the 23S rRNA of the 50S subunit in the ribosome. The chain is Small ribosomal subunit protein uS15 from Chromobacterium violaceum (strain ATCC 12472 / DSM 30191 / JCM 1249 / CCUG 213 / NBRC 12614 / NCIMB 9131 / NCTC 9757 / MK).